A 116-amino-acid polypeptide reads, in one-letter code: Vesicle-associated membrane protein 5 (116 aa).

The Cytoplasmic portion of the chain corresponds to Met1 to Cys72. One can recognise a v-SNARE coiled-coil homology domain in the interval Glu5 to Glu65. Ser41, Ser48, and Ser49 each carry phosphoserine. A helical; Anchor for type IV membrane protein membrane pass occupies residues Val73–Leu93. The Vesicular segment spans residues Pro94–Asn116. The tract at residues Ser96–Asn116 is disordered.

This sequence belongs to the synaptobrevin family. Post-translationally, (Microbial infection) Targeted and hydrolyzed by C.botulinum neurotoxin type X (BoNT/X) which hydrolyzes the 40-Arg-|-Ser-41 bond and probably inhibits neurotransmitter release. It remains unknown whether BoNT/X is ever produced, or what organisms it targets.

Its subcellular location is the cell membrane. The protein resides in the endomembrane system. The protein localises to the golgi apparatus. It localises to the trans-Golgi network membrane. Functionally, may participate in trafficking events that are associated with myogenesis, such as myoblast fusion and/or GLUT4 trafficking. This is Vesicle-associated membrane protein 5 (VAMP5) from Homo sapiens (Human).